Here is a 770-residue protein sequence, read N- to C-terminus: DEAD-box ATP-dependent RNA helicase 24 (770 aa).

Residues 1 to 106 (MSKRPKLGGF…ADSDDEDDPV (106 aa)) are disordered. Polar residues predominate over residues 14–26 (RPTSYSFERSQPP). Residues 34–43 (DDPDLDDIAF) show a composition bias toward acidic residues. Residues 44 to 55 (SDDAAAPSDAPP) show a composition bias toward low complexity. Positions 219 to 247 (KSFADCGFPVQLMNAIAKQGYEKPTTIQC) match the Q motif motif. One can recognise a Helicase ATP-binding domain in the interval 250-425 (LPIVLSGRDI…REILTDPIRV (176 aa)). 263 to 270 (AKTGSGKT) contributes to the ATP binding site. The DEAD box signature appears at 373-376 (DEAD). The Helicase C-terminal domain maps to 436 to 599 (DIKQVVNVLP…DVPNELMDLA (164 aa)). A compositionally biased stretch (basic and acidic residues) spans 604–613 (RFRANRDSRK). Disordered stretches follow at residues 604–640 (RFRA…RGRG), 683–704 (VSAS…PSSF), and 729–770 (LPAP…GWDR). A compositionally biased stretch (gly residues) spans 621-635 (GKGGGGGGGGGSGAR). Residues 683-697 (VSASSSNTPSNSAPS) are compositionally biased toward low complexity. The segment covering 744–753 (TVENANPNPE) has biased composition (polar residues). Over residues 754–770 (SSRDRTRERKRPSGWDR) the composition is skewed to basic and acidic residues.

This sequence belongs to the DEAD box helicase family.

The enzyme catalyses ATP + H2O = ADP + phosphate + H(+). The protein is DEAD-box ATP-dependent RNA helicase 24 of Oryza sativa subsp. japonica (Rice).